The sequence spans 137 residues: Large ribosomal subunit protein uL16 (137 aa).

It belongs to the universal ribosomal protein uL16 family. In terms of assembly, part of the 50S ribosomal subunit.

Functionally, binds 23S rRNA and is also seen to make contacts with the A and possibly P site tRNAs. The chain is Large ribosomal subunit protein uL16 from Oleidesulfovibrio alaskensis (strain ATCC BAA-1058 / DSM 17464 / G20) (Desulfovibrio alaskensis).